The chain runs to 86 residues: Large ribosomal subunit protein bL31B (86 aa).

Belongs to the bacterial ribosomal protein bL31 family. Type B subfamily. In terms of assembly, part of the 50S ribosomal subunit.

This is Large ribosomal subunit protein bL31B from Cupriavidus taiwanensis (strain DSM 17343 / BCRC 17206 / CCUG 44338 / CIP 107171 / LMG 19424 / R1) (Ralstonia taiwanensis (strain LMG 19424)).